The following is a 37-amino-acid chain: Photosystem I reaction center subunit VIII (37 aa).

A helical transmembrane segment spans residues 7-27; it reads LPAIFVPLVGLVFPAIAMVSL.

It belongs to the PsaI family.

The protein resides in the plastid. The protein localises to the chloroplast thylakoid membrane. May help in the organization of the PsaL subunit. This is Photosystem I reaction center subunit VIII from Morus indica (Mulberry).